We begin with the raw amino-acid sequence, 247 residues long: V-type proton ATPase subunit D (247 aa).

This sequence belongs to the V-ATPase D subunit family. As to quaternary structure, V-ATPase is a heteromultimeric enzyme made up of two complexes: the ATP-hydrolytic V1 complex and the proton translocation V0 complex. The V1 complex consists of three catalytic AB heterodimers that form a heterohexamer, three peripheral stalks each consisting of EG heterodimers, one central rotor including subunits D and F, and the regulatory subunits C and H. The proton translocation complex V0 consists of the proton transport subunit a, a ring of proteolipid subunits c9c'', rotary subunit d, subunits e and f, and the accessory subunits ATP6AP1/Ac45 and ATP6AP2/PRR. Interacts with SNX10.

It is found in the membrane. It localises to the cytoplasmic vesicle. The protein localises to the clathrin-coated vesicle membrane. The protein resides in the cytoplasm. Its subcellular location is the cytoskeleton. It is found in the microtubule organizing center. It localises to the centrosome. The protein localises to the cell projection. The protein resides in the cilium. Functionally, subunit of the V1 complex of vacuolar(H+)-ATPase (V-ATPase), a multisubunit enzyme composed of a peripheral complex (V1) that hydrolyzes ATP and a membrane integral complex (V0) that translocates protons. V-ATPase is responsible for acidifying and maintaining the pH of intracellular compartments and in some cell types, is targeted to the plasma membrane, where it is responsible for acidifying the extracellular environment. May play a role in cilium biogenesis through regulation of the transport and the localization of proteins to the cilium. The chain is V-type proton ATPase subunit D (ATP6V1D) from Homo sapiens (Human).